The chain runs to 185 residues: Ribosome-recycling factor (185 aa).

The protein belongs to the RRF family.

The protein localises to the cytoplasm. In terms of biological role, responsible for the release of ribosomes from messenger RNA at the termination of protein biosynthesis. May increase the efficiency of translation by recycling ribosomes from one round of translation to another. The sequence is that of Ribosome-recycling factor from Streptococcus suis (strain 98HAH33).